The chain runs to 479 residues: Glycogen synthase (479 aa).

Lys15 provides a ligand contact to ADP-alpha-D-glucose.

It belongs to the glycosyltransferase 1 family. Bacterial/plant glycogen synthase subfamily.

The catalysed reaction is [(1-&gt;4)-alpha-D-glucosyl](n) + ADP-alpha-D-glucose = [(1-&gt;4)-alpha-D-glucosyl](n+1) + ADP + H(+). It functions in the pathway glycan biosynthesis; glycogen biosynthesis. Its function is as follows. Synthesizes alpha-1,4-glucan chains using ADP-glucose. The sequence is that of Glycogen synthase from Histophilus somni (strain 129Pt) (Haemophilus somnus).